The following is a 151-amino-acid chain: ATP synthase subunit b' (151 aa).

A helical membrane pass occupies residues 18–38 (TLPLMALQVVLLTFILNALFF).

It belongs to the ATPase B chain family. In terms of assembly, F-type ATPases have 2 components, F(1) - the catalytic core - and F(0) - the membrane proton channel. F(1) has five subunits: alpha(3), beta(3), gamma(1), delta(1), epsilon(1). F(0) has four main subunits: a(1), b(1), b'(1) and c(10-14). The alpha and beta chains form an alternating ring which encloses part of the gamma chain. F(1) is attached to F(0) by a central stalk formed by the gamma and epsilon chains, while a peripheral stalk is formed by the delta, b and b' chains.

The protein resides in the cellular thylakoid membrane. In terms of biological role, f(1)F(0) ATP synthase produces ATP from ADP in the presence of a proton or sodium gradient. F-type ATPases consist of two structural domains, F(1) containing the extramembraneous catalytic core and F(0) containing the membrane proton channel, linked together by a central stalk and a peripheral stalk. During catalysis, ATP synthesis in the catalytic domain of F(1) is coupled via a rotary mechanism of the central stalk subunits to proton translocation. Functionally, component of the F(0) channel, it forms part of the peripheral stalk, linking F(1) to F(0). The b'-subunit is a diverged and duplicated form of b found in plants and photosynthetic bacteria. The polypeptide is ATP synthase subunit b' (Prochlorococcus marinus (strain MIT 9313)).